Consider the following 315-residue polypeptide: Glutathione synthetase (315 aa).

One can recognise an ATP-grasp domain in the interval 125–310 (KLFTAWFSEF…ITGMLFDAIE (186 aa)). 151–207 (HQAKGDIILKPLDGMGGTSIFRVKQDDPNLGVIIETLTQYGNQYAMAQAFIPEITKG) contacts ATP. Glu281 and Asn283 together coordinate Mg(2+).

The protein belongs to the prokaryotic GSH synthase family. The cofactor is Mg(2+). Mn(2+) serves as cofactor.

The catalysed reaction is gamma-L-glutamyl-L-cysteine + glycine + ATP = glutathione + ADP + phosphate + H(+). Its pathway is sulfur metabolism; glutathione biosynthesis; glutathione from L-cysteine and L-glutamate: step 2/2. The protein is Glutathione synthetase of Shewanella oneidensis (strain ATCC 700550 / JCM 31522 / CIP 106686 / LMG 19005 / NCIMB 14063 / MR-1).